The following is a 936-amino-acid chain: Protocadherin gamma-A10 (936 aa).

Residues Met1–Ala32 form the signal peptide. Cadherin domains lie at Arg33 to Phe137, Gln138 to Phe246, Thr247 to Leu351, Thr352 to Phe456, Ser457 to Ile566, and Asp574 to Asn687. At Arg33–Tyr696 the chain is on the extracellular side. A glycan (N-linked (GlcNAc...) asparagine) is linked at Asn51. Residues Asn423 and Asn549 are each glycosylated (N-linked (GlcNAc...) asparagine). A helical membrane pass occupies residues Leu697 to Ala717. The Cytoplasmic segment spans residues His718–Lys936. 2 disordered regions span residues Glu806–Asn845 and Ala906–Lys936. Residues Trp820–Asn845 are compositionally biased toward polar residues. Positions Asn926 to Lys936 are enriched in basic residues.

The protein resides in the cell membrane. Potential calcium-dependent cell-adhesion protein. May be involved in the establishment and maintenance of specific neuronal connections in the brain. In Homo sapiens (Human), this protein is Protocadherin gamma-A10 (PCDHGA10).